The sequence spans 361 residues: Peptide chain release factor 1 (361 aa).

Position 236 is an N5-methylglutamine (Gln-236). The disordered stretch occupies residues 286–306 (AADSQRAEARKGQVGSGDRSE).

This sequence belongs to the prokaryotic/mitochondrial release factor family. Methylated by PrmC. Methylation increases the termination efficiency of RF1.

It is found in the cytoplasm. Functionally, peptide chain release factor 1 directs the termination of translation in response to the peptide chain termination codons UAG and UAA. This chain is Peptide chain release factor 1, found in Magnetococcus marinus (strain ATCC BAA-1437 / JCM 17883 / MC-1).